The following is a 343-amino-acid chain: Cytoplasmic tRNA 2-thiolation protein 1 (343 aa).

It belongs to the TtcA family. CTU1/NCS6/ATPBD3 subfamily.

It localises to the cytoplasm. The protein operates within tRNA modification; 5-methoxycarbonylmethyl-2-thiouridine-tRNA biosynthesis. Its function is as follows. Plays a central role in 2-thiolation of mcm(5)S(2)U at tRNA wobble positions of tRNA(Lys), tRNA(Glu) and tRNA(Gln). Directly binds tRNAs and probably acts by catalyzing adenylation of tRNAs, an intermediate required for 2-thiolation. It is unclear whether it acts as a sulfurtransferase that transfers sulfur from thiocarboxylated URM1 onto the uridine of tRNAs at wobble position. The chain is Cytoplasmic tRNA 2-thiolation protein 1 from Drosophila sechellia (Fruit fly).